The chain runs to 611 residues: Mitogen-activated protein kinase 10 (611 aa).

A Protein kinase domain is found at 25 to 316; that stretch reads YKIQEVIGKG…AEEALAHPYF (292 aa). Residues 31 to 39 and Lys54 each bind ATP; that span reads IGKGSYGVV. Asp151 (proton acceptor) is an active-site residue. Thr187 is modified (phosphothreonine). A TXY motif is present at residues 187–189; that stretch reads TDY. Position 189 is a phosphotyrosine (Tyr189). Positions 394–481 are disordered; sequence ENGGNGPVIP…RVVGPVLPYE (88 aa). Positions 426 to 439 are enriched in basic and acidic residues; it reads EQPRIGPSRDKPSD.

It belongs to the protein kinase superfamily. CMGC Ser/Thr protein kinase family. MAP kinase subfamily. Post-translationally, dually phosphorylated on Thr-187 and Tyr-189, which activates the enzyme.

It catalyses the reaction L-seryl-[protein] + ATP = O-phospho-L-seryl-[protein] + ADP + H(+). The catalysed reaction is L-threonyl-[protein] + ATP = O-phospho-L-threonyl-[protein] + ADP + H(+). Activated by threonine and tyrosine phosphorylation. The protein is Mitogen-activated protein kinase 10 (MPK10) of Oryza sativa subsp. japonica (Rice).